Here is a 276-residue protein sequence, read N- to C-terminus: Lipoyl synthase (276 aa).

[4Fe-4S] cluster contacts are provided by cysteine 27, cysteine 32, cysteine 38, cysteine 53, cysteine 57, cysteine 60, and serine 266. A Radical SAM core domain is found at 39–255 (FGNKTATFMI…EEIGYEMGFK (217 aa)).

This sequence belongs to the radical SAM superfamily. Lipoyl synthase family. The cofactor is [4Fe-4S] cluster.

Its subcellular location is the cytoplasm. The catalysed reaction is [[Fe-S] cluster scaffold protein carrying a second [4Fe-4S](2+) cluster] + N(6)-octanoyl-L-lysyl-[protein] + 2 oxidized [2Fe-2S]-[ferredoxin] + 2 S-adenosyl-L-methionine + 4 H(+) = [[Fe-S] cluster scaffold protein] + N(6)-[(R)-dihydrolipoyl]-L-lysyl-[protein] + 4 Fe(3+) + 2 hydrogen sulfide + 2 5'-deoxyadenosine + 2 L-methionine + 2 reduced [2Fe-2S]-[ferredoxin]. It functions in the pathway protein modification; protein lipoylation via endogenous pathway; protein N(6)-(lipoyl)lysine from octanoyl-[acyl-carrier-protein]: step 2/2. In terms of biological role, catalyzes the radical-mediated insertion of two sulfur atoms into the C-6 and C-8 positions of the octanoyl moiety bound to the lipoyl domains of lipoate-dependent enzymes, thereby converting the octanoylated domains into lipoylated derivatives. The protein is Lipoyl synthase of Aquifex aeolicus (strain VF5).